A 228-amino-acid polypeptide reads, in one-letter code: Glutamate transport system permease protein GluC (228 aa).

5 helical membrane passes run 16-36 (FWVT…FGTI), 64-84 (LTLV…LTLA), 100-120 (AVLG…RSGI), 145-165 (IIFP…LIAL), and 195-215 (LFVV…PMGL). The ABC transmembrane type-1 domain maps to 16–217 (FWVTIKLTIY…ILTLPMGLGL (202 aa)).

Belongs to the binding-protein-dependent transport system permease family. HisMQ subfamily. As to quaternary structure, the complex is composed of two ATP-binding proteins (GluA), two transmembrane proteins (GluC and GluD) and a solute-binding protein (GluB).

It is found in the cell membrane. In terms of biological role, part of the ABC transporter complex GluABCD involved in glutamate uptake. Probably responsible for the translocation of the substrate across the membrane. The protein is Glutamate transport system permease protein GluC of Corynebacterium glutamicum (strain ATCC 13032 / DSM 20300 / JCM 1318 / BCRC 11384 / CCUG 27702 / LMG 3730 / NBRC 12168 / NCIMB 10025 / NRRL B-2784 / 534).